Here is a 195-residue protein sequence, read N- to C-terminus: Large ribosomal subunit protein mL58 (195 aa).

A mitochondrion-targeting transit peptide spans 1-18; it reads MIGRGVCCRSFHTAGSAW.

Belongs to the mitochondrion-specific ribosomal protein mL58 family. As to quaternary structure, component of the mitochondrial large ribosomal subunit (mt-LSU). Mature yeast 74S mitochondrial ribosomes consist of a small (37S) and a large (54S) subunit. The 37S small subunit contains a 15S ribosomal RNA (15S mt-rRNA) and 34 different proteins. The 54S large subunit contains a 21S rRNA (21S mt-rRNA) and 46 different proteins.

Its subcellular location is the mitochondrion. Its function is as follows. Component of the mitochondrial ribosome (mitoribosome), a dedicated translation machinery responsible for the synthesis of mitochondrial genome-encoded proteins, including at least some of the essential transmembrane subunits of the mitochondrial respiratory chain. The mitoribosomes are attached to the mitochondrial inner membrane and translation products are cotranslationally integrated into the membrane. The polypeptide is Large ribosomal subunit protein mL58 (MRPL20) (Saccharomyces cerevisiae (strain ATCC 204508 / S288c) (Baker's yeast)).